A 525-amino-acid chain; its full sequence is MPDAPRPPRPEGLHEQTIARLNNLDAQVDAGFEAYPYSYPQTHHARDVFAAHPAREEGTGEGGTLEPGQKWEEESYSLAGRVTLMRHMGKAAFADLSDEDGKIQLFFSKQDTAGFDATKKIDLGDIIGVKGHPFVTKTGQLTLHVTEWQPLVKSLHPLPSKFHGLQDEELRARRRYVDLMVTEGAREKFQARSRMIRYIRNELDERGFMEVEGPTLQVTAGGAEARPFMTHHNALSYDFKLRISLELYLKRLLVGGFERVYEIGRVYRNEGIDRTHNPEFTMLELYWAYADYSDIAKLVEDLLSGLAKEVHGSYQFEYQGKTLDFTPPFARVDYLGGLREHVPGLDFDPLDLDRLRAFCDERFPQWKGVPSYKLLDKLFGEFVEPLLSNPTFVMDHPAVISPLAKKHRSRPEAVTERFEVFCSGFELANAFSELNDAFDQRERFEAQTARQAAGDDEAHPQDEDFLLALEYGMPPAGGLGIGIDRLAMLLTDSDSIRDVLLFPLLRPEGGEAEEADDTAQENTAG.

Mg(2+) contacts are provided by glutamate 419 and glutamate 426.

The protein belongs to the class-II aminoacyl-tRNA synthetase family. As to quaternary structure, homodimer. The cofactor is Mg(2+).

It is found in the cytoplasm. The catalysed reaction is tRNA(Lys) + L-lysine + ATP = L-lysyl-tRNA(Lys) + AMP + diphosphate. The polypeptide is Lysine--tRNA ligase (lysS) (Deinococcus radiodurans (strain ATCC 13939 / DSM 20539 / JCM 16871 / CCUG 27074 / LMG 4051 / NBRC 15346 / NCIMB 9279 / VKM B-1422 / R1)).